Reading from the N-terminus, the 232-residue chain is 2,3,4,5-tetrahydropyridine-2,6-dicarboxylate N-acetyltransferase (232 aa).

The protein belongs to the transferase hexapeptide repeat family. DapH subfamily.

It catalyses the reaction (S)-2,3,4,5-tetrahydrodipicolinate + acetyl-CoA + H2O = L-2-acetamido-6-oxoheptanedioate + CoA. It functions in the pathway amino-acid biosynthesis; L-lysine biosynthesis via DAP pathway; LL-2,6-diaminopimelate from (S)-tetrahydrodipicolinate (acetylase route): step 1/3. Catalyzes the transfer of an acetyl group from acetyl-CoA to tetrahydrodipicolinate. This is 2,3,4,5-tetrahydropyridine-2,6-dicarboxylate N-acetyltransferase from Streptococcus gordonii (strain Challis / ATCC 35105 / BCRC 15272 / CH1 / DL1 / V288).